The sequence spans 293 residues: Elongation factor Ts (293 aa).

The interval 80–83 is involved in Mg(2+) ion dislocation from EF-Tu; it reads TDFV.

Belongs to the EF-Ts family.

The protein localises to the cytoplasm. Its function is as follows. Associates with the EF-Tu.GDP complex and induces the exchange of GDP to GTP. It remains bound to the aminoacyl-tRNA.EF-Tu.GTP complex up to the GTP hydrolysis stage on the ribosome. The chain is Elongation factor Ts from Staphylococcus aureus (strain USA300).